A 423-amino-acid polypeptide reads, in one-letter code: Polyglutamylase complex subunit TTLL1 (423 aa).

The TTL domain occupies 1-367 (MAGKVKWVTD…NGEIPDCKWN (367 aa)). Residues Lys138, 144–145 (QG), 181–184 (SLYI), and 194–196 (KFD) contribute to the ATP site. Residue Gln144 coordinates a protein. Arg220 is an L-glutamate binding site. Residue 241–242 (TN) participates in ATP binding. Residue Lys259 participates in L-glutamate binding. 3 residues coordinate Mg(2+): Asp313, Glu326, and Asn328. Lys344 contacts L-glutamate. Residues 391–423 (GAERELRSRPGQSLGPKGSRLRDAGRTVLTTWK) form a disordered region.

Belongs to the tubulin polyglutamylase family. In terms of assembly, part of the neuronal tubulin polyglutamylase complex which contains TPGS1, TPGS2, TTLL1, LRRC49 and NICN1. Interacts with PCM1, CSTPP1 and LRRC49. The cofactor is Mg(2+).

The protein resides in the cytoplasm. It localises to the cytoskeleton. The protein localises to the cilium basal body. Its subcellular location is the cilium axoneme. It is found in the cell projection. The protein resides in the cilium. It localises to the flagellum. The enzyme catalyses (L-glutamyl)(n)-gamma-L-glutamyl-L-glutamyl-[protein] + L-glutamate + ATP = (L-glutamyl)(n+1)-gamma-L-glutamyl-L-glutamyl-[protein] + ADP + phosphate + H(+). Functionally, catalytic subunit of a polyglutamylase complex which modifies tubulin, generating side chains of glutamate on the gamma-carboxyl group of specific glutamate residues within the C-terminal tail of tubulin. Probably involved in the side-chain elongation step of the polyglutamylation reaction rather than the initiation step. Modifies both alpha- and beta-tubulins with a preference for the alpha-tail. Unlike most polyglutamylases of the tubulin--tyrosine ligase family, only displays a catalytic activity when in complex with other proteins as it is most likely lacking domains important for autonomous activity. Part of the neuronal tubulin polyglutamylase complex. Mediates cilia and flagella polyglutamylation which is essential for their biogenesis and motility. Involved in respiratory motile cilia function through the regulation of beating asymmetry. Essential for sperm flagella biogenesis, motility and male fertility. Involved in KLF4 glutamylation which impedes its ubiquitination, thereby leading to somatic cell reprogramming, pluripotency maintenance and embryogenesis. The polypeptide is Polyglutamylase complex subunit TTLL1 (TTLL1) (Bos taurus (Bovine)).